The following is a 345-amino-acid chain: Mitochondrial substrate carrier family protein J (345 aa).

At 1-31 the chain is on the mitochondrial intermembrane side; the sequence is MSSSHTIQETKEVHTKTNKRIQWDDLDPKRY. 3 Solcar repeats span residues 30 to 118, 129 to 217, and 255 to 342; these read RYYF…VKQG, DLLF…SKSK, and EDPI…VKKL. A helical membrane pass occupies residues 32–52; the sequence is YFYNFLLGGSIDLLMFPLDVI. Residues 53-88 are Mitochondrial matrix-facing; it reads RTRLQVQGSQNVIQSFPQYNGTFDGFKKLIRLEGKR. Residues 89 to 110 form a helical membrane-spanning segment; that stretch reads ALYKGFLTSECGYLCSRAIYFG. Residues 111–129 lie on the Mitochondrial intermembrane side of the membrane; it reads SYEFVKQGFLKGRSDSDSD. A helical transmembrane segment spans residues 130-150; it reads LLFVTTISGAISEALASVIWV. Residues 151–191 are Mitochondrial matrix-facing; that stretch reads PFDVATQSVQIQGSLSKPKYKGGSDVFKKIYGERGIKGLYK. Residues 192 to 208 traverse the membrane as a helical segment; it reads GFGATIIRNVPYSGIWW. Topologically, residues 209-257 are mitochondrial intermembrane; it reads GTYEISKSKLTQFNIRQKLGLKERSSHSLAVSAEIDKNNPSHEVENEDP. The helical transmembrane segment at 258–278 threads the bilayer; that stretch reads IIHFISGFFAAVFATSITNPL. Over 279-316 the chain is Mitochondrial matrix; it reads DVAKTRLQTGVFPENEKPNFYTIIKSTIRKEGIRALWK. A helical membrane pass occupies residues 317-337; the sequence is GLVPSLLTSTPYSMISIFLYE. Residues 338 to 345 lie on the Mitochondrial intermembrane side of the membrane; the sequence is EVKKLSLK.

The protein belongs to the mitochondrial carrier (TC 2.A.29) family.

It localises to the mitochondrion inner membrane. Mitochondrial solute carriers shuttle metabolites, nucleotides, and cofactors through the mitochondrial inner membrane. The chain is Mitochondrial substrate carrier family protein J (mcfJ) from Dictyostelium discoideum (Social amoeba).